The primary structure comprises 554 residues: Eukaryotic translation initiation factor 3 subunit D-2 (554 aa).

Residues 116–149 (RGNAAIGGGQGGAGGTGGAGVGNKYGKGRDMRRG) are disordered. Gly residues predominate over residues 120–140 (AIGGGQGGAGGTGGAGVGNKY). The tract at residues 291–305 (QFDLLTVNETALEPP) is RNA gate. The segment at 532 to 554 (FDSDGNDDEETSDDRPFLKSLGN) is disordered.

The protein belongs to the eIF-3 subunit D family. In terms of assembly, component of the eukaryotic translation initiation factor 3 (eIF-3) complex. The eIF-3 complex interacts with pix.

It is found in the cytoplasm. Its function is as follows. mRNA cap-binding component of the eukaryotic translation initiation factor 3 (eIF-3) complex, which is involved in protein synthesis of a specialized repertoire of mRNAs and, together with other initiation factors, stimulates binding of mRNA and methionyl-tRNAi to the 40S ribosome. The eIF-3 complex specifically targets and initiates translation of a subset of mRNAs involved in cell proliferation. In the eIF-3 complex, eif3d specifically recognizes and binds the 7-methylguanosine cap of a subset of mRNAs. The polypeptide is Eukaryotic translation initiation factor 3 subunit D-2 (Drosophila virilis (Fruit fly)).